Here is a 513-residue protein sequence, read N- to C-terminus: Glycerol-3-phosphate dehydrogenase (513 aa).

Position 16–44 (16–44) interacts with FAD; sequence DVAVIGGGINGVGIAADAAGRGLSVFLCE.

Belongs to the FAD-dependent glycerol-3-phosphate dehydrogenase family. FAD is required as a cofactor.

It is found in the cytoplasm. The catalysed reaction is a quinone + sn-glycerol 3-phosphate = dihydroxyacetone phosphate + a quinol. This Pseudomonas tolaasii protein is Glycerol-3-phosphate dehydrogenase (glpD).